Here is a 132-residue protein sequence, read N- to C-terminus: Lectin OAA (132 aa).

2 consecutive repeat copies span residues 1 to 66 (ALYN…TLLG) and 67 to 132 (NNSY…GTTL). Residues 1–132 (ALYNVENQWG…GPIGFKGTTL (132 aa)) form a 2 X approximate tandem repeats region.

In terms of assembly, monomer.

Functionally, lectin specific for high mannose N-glycans, recognizes the branched moiety of these glycans. Does not recognize other types of N-glycans or monosaccharides. Agglutinates trypsin-treated rabbit erythrocytes. Does not require divalent cations for activity. Inhibits HIV replication in MT4 cells with an EC(50) of 45 nM. Binds to the HIV envelope glycoprotein gp120. This Planktothrix agardhii (Oscillatoria agardhii) protein is Lectin OAA.